We begin with the raw amino-acid sequence, 308 residues long: Carbonic anhydrase 6 (308 aa).

The first 17 residues, 1 to 17, serve as a signal peptide directing secretion; that stretch reads MRALVLLLSLFLLGGQA. The Alpha-carbonic anhydrase domain maps to 21–278; sequence SDWTYSEGAL…LNHRVVESNF (258 aa). Cysteine 42 and cysteine 224 are joined by a disulfide. Asparagine 67 carries an N-linked (GlcNAc...) asparagine glycan. Histidine 85 functions as the Proton donor/acceptor in the catalytic mechanism. Histidine 111, histidine 113, and histidine 138 together coordinate Zn(2+). Residue 220–221 coordinates substrate; the sequence is TT. N-linked (GlcNAc...) asparagine glycosylation is present at asparagine 256.

This sequence belongs to the alpha-carbonic anhydrase family. Zn(2+) is required as a cofactor. Major constituent of saliva.

The protein localises to the secreted. The enzyme catalyses hydrogencarbonate + H(+) = CO2 + H2O. Inhibited by coumarins, sulfonamide derivatives such as acetazolamide (AZA), saccharin and Foscarnet (phosphonoformate trisodium salt). Its function is as follows. Reversible hydration of carbon dioxide. Its role in saliva is unknown. The sequence is that of Carbonic anhydrase 6 (CA6) from Homo sapiens (Human).